Reading from the N-terminus, the 375-residue chain is MVKGVIVLAAGGTGGHLFPAEALAHELKARGWDVHLATDARAQRFAGAFAEDHVHVIRSATIAGRNPIALLKTFWSLWQGNLDSRKLFRRLKPKLVAGFGGYPTLPPLYAASNMNIPTMVHEQNAVMGRANKGLAGRVKAIAGGFLPETGGVYAEKTVTTGNPVRPPVLAAAETSYKPVKADERFRLLVFGGSQGAQFFSTAIPAAVALLPDRDRARLLITQQARKEDEAAVREAYKKLGVPADVAPFFNDMPARMADAQFVISRSGASTVSEITVIGRPAMLVPFPHALDHDQAANAAALAAVGGGEVVRQSELSPERLAEILQAAMNEPQRLEAQAKAAKSVGKPDAARLLADLAEAIAAGKSVQEFKEGTRP.

UDP-N-acetyl-alpha-D-glucosamine is bound by residues 13-15, Asn124, Arg165, Ser193, and Gln294; that span reads TGG.

Belongs to the glycosyltransferase 28 family. MurG subfamily.

It is found in the cell inner membrane. The catalysed reaction is di-trans,octa-cis-undecaprenyl diphospho-N-acetyl-alpha-D-muramoyl-L-alanyl-D-glutamyl-meso-2,6-diaminopimeloyl-D-alanyl-D-alanine + UDP-N-acetyl-alpha-D-glucosamine = di-trans,octa-cis-undecaprenyl diphospho-[N-acetyl-alpha-D-glucosaminyl-(1-&gt;4)]-N-acetyl-alpha-D-muramoyl-L-alanyl-D-glutamyl-meso-2,6-diaminopimeloyl-D-alanyl-D-alanine + UDP + H(+). The protein operates within cell wall biogenesis; peptidoglycan biosynthesis. Its function is as follows. Cell wall formation. Catalyzes the transfer of a GlcNAc subunit on undecaprenyl-pyrophosphoryl-MurNAc-pentapeptide (lipid intermediate I) to form undecaprenyl-pyrophosphoryl-MurNAc-(pentapeptide)GlcNAc (lipid intermediate II). This Brucella anthropi (strain ATCC 49188 / DSM 6882 / CCUG 24695 / JCM 21032 / LMG 3331 / NBRC 15819 / NCTC 12168 / Alc 37) (Ochrobactrum anthropi) protein is UDP-N-acetylglucosamine--N-acetylmuramyl-(pentapeptide) pyrophosphoryl-undecaprenol N-acetylglucosamine transferase.